The primary structure comprises 152 residues: Large ribosomal subunit protein bL9 (152 aa).

Belongs to the bacterial ribosomal protein bL9 family.

Binds to the 23S rRNA. The chain is Large ribosomal subunit protein bL9 from Prochlorococcus marinus (strain SARG / CCMP1375 / SS120).